The sequence spans 410 residues: Transcription factor Dp-1 (410 aa).

Residue lysine 3 is modified to N6-acetyllysine. Residue serine 23 is modified to Phosphoserine. Over residues 73–100 (SNTLVVGSPHTPSTHFASQNQPSDSSPW) the composition is skewed to polar residues. The segment at 73–116 (SNTLVVGSPHTPSTHFASQNQPSDSSPWSAGKRNRKGEKNGKGL) is disordered. Basic residues predominate over residues 104–116 (KRNRKGEKNGKGL). The tract at residues 105-127 (RNRKGEKNGKGLRHFSMKVCEKV) is interaction with CEBPA. A DNA-binding region spans residues 113 to 195 (GKGLRHFSMK…KKEIKWIGLP (83 aa)). Residues 161–195 (DQKNIRRRVYDALNVLMAMNIISKEKKEIKWIGLP) carry the DEF box motif. Residues 204–277 (NLEVERQRRL…KKTVIDCSIS (74 aa)) are dimerization. Residues 211–327 (RRLERIKQKQ…DLKMARSLVP (117 aa)) are enhances binding of RB protein to E2F. Positions 214-246 (ERIKQKQSQLQELILQQIAFKNLVQRNRHAEQQ) are DCB1. A DCB2 region spans residues 259-315 (LPFIIVNTSKKTVIDCSISNDKFEYLFNFDNTFEIHDDIEVLKRMGMACGLESGSCS). Residues 370–410 (GMLATSSNGSQYSGSRVETPVSYVGEDDEEDDDFNENDEDD) are disordered. Residues 373–385 (ATSSNGSQYSGSR) show a composition bias toward polar residues. Residues 394 to 410 (GEDDEEDDDFNENDEDD) are compositionally biased toward acidic residues.

This sequence belongs to the E2F/DP family. Component of the E2F:DP transcription factor complex. Forms heterodimers with E2F family members. The complex can interact with hypophosphorylated retinoblastoma protein RB1 and related proteins (RBL1 and RBL2) that inhibit the E2F transactivation domain. This repression involves recruitment of histone deacetylase (HDAC). During the cell cycle, from mid-to-late G1 phase, RB family members become phosphorylated, detach from the DRTF1/E2F complex to render E2F transcriptionally active. Viral oncoproteins, notably E1A, T-antigen and HPV E7, are capable of sequestering RB protein, thus releasing the active complex. Part of the E2F6.com-1 complex in G0 phase is composed of E2F6, MGA, MAX, TFDP1, CBX3, BAT8, EUHMTASE1, RING1, RNF2, MBLR, L3MBTL2 YAF2. Component of the DREAM complex (also named LINC complex) at least composed of E2F4, E2F5, LIN9, LIN37, LIN52, LIN54, MYBL1, MYBL2, RBL1, RBL2, RBBP4, TFDP1 and TFDP2. The complex exists in quiescent cells where it represses cell cycle-dependent genes. It dissociates in S phase when LIN9, LIN37, LIN52 and LIN54 form a subcomplex that binds to MYBL2. The complex TFDP1:E2F1 interacts with CEBPA; the interaction prevents CEBPA binding to target gene promoters and represses its transcriptional activity. Post-translationally, phosphorylation by E2F1-bound cyclin A-CDK2, in the S phase, inhibits E2F-mediated DNA binding and transactivation. In terms of processing, ubiquitinated by the BCR(KBTBD5) complex, leading to its subsequent degradation. As to expression, highest levels in muscle. Also expressed in brain, placenta, liver and kidney. Lower levels in lung and pancreas. Not detected in heart.

It is found in the nucleus. The protein resides in the cytoplasm. Functionally, can stimulate E2F-dependent transcription. Binds DNA cooperatively with E2F family members through the E2 recognition site, 5'-TTTC[CG]CGC-3', found in the promoter region of a number of genes whose products are involved in cell cycle regulation or in DNA replication. The E2F1:DP complex appears to mediate both cell proliferation and apoptosis. Blocks adipocyte differentiation by repressing CEBPA binding to its target gene promoters. The polypeptide is Transcription factor Dp-1 (TFDP1) (Homo sapiens (Human)).